A 515-amino-acid polypeptide reads, in one-letter code: MIILKKQHDTIIVLDFGSQYNQLIARRIREFGVYSELHPHTITAEEIKAMNPKGIIFSGGPNSVYGEGALHCDEKIFDLGLPIFGICYGMQLMTQQFGGTVERANHREYGKAVLKVENESKLYANLPEEQVVWMSHGDLVTGLPEGFVVDATSESCPIAGMSNEAKNLYGVQFHPEVRHSEHGNDLIKNFVFGVCGCSEGWNMENFIEVELEKIRETVGDKKVLCALSGGVDSSVVAVLIHKAIGDQLTCIFVDHGLLRKGEAEGVMKTFSEGFHMNVIKVDAKERFMNKLKGVEDPEQKRKIIGNEFIYVFDDEASKLEGMDFLAQGTLYTDIVESGTATAQTIKSHHNVGGLPEDMQFKLIEPLNTLFKDEVRVLGSELGIPDEIVWRQPFPGPGLGIRVLGEITEEKLEIVRESDAILREEIIKAGLDREIWQYFTALPGMRSVGVMGDERTYDYTVGIRAVTSIDGMTADWARIPWDVLEKISVRIVNEVKHVNRIVYDVTSKPPATIEWE.

In terms of domain architecture, Glutamine amidotransferase type-1 spans 10-200; sequence TIIVLDFGSQ…VFGVCGCSEG (191 aa). Cysteine 87 (nucleophile) is an active-site residue. Catalysis depends on residues histidine 174 and glutamate 176. The GMPS ATP-PPase domain occupies 201–390; the sequence is WNMENFIEVE…LGIPDEIVWR (190 aa). Residue 228-234 participates in ATP binding; sequence SGGVDSS.

As to quaternary structure, homodimer.

It carries out the reaction XMP + L-glutamine + ATP + H2O = GMP + L-glutamate + AMP + diphosphate + 2 H(+). The protein operates within purine metabolism; GMP biosynthesis; GMP from XMP (L-Gln route): step 1/1. Its function is as follows. Catalyzes the synthesis of GMP from XMP. The sequence is that of GMP synthase [glutamine-hydrolyzing] from Bacillus anthracis (strain A0248).